We begin with the raw amino-acid sequence, 343 residues long: Serpentine receptor class alpha-11 (343 aa).

The Extracellular segment spans residues 1 to 24 (MSSPDTPVCASPQQMEMYNSHFYT). Residues 25–45 (CALFFNLLIAFTSMTLIIMAI) form a helical membrane-spanning segment. At 46-60 (RKLLTESIINTSTRM) the chain is on the cytoplasmic side. The helical transmembrane segment at 61 to 81 (FLIVGLLCCSLHQTAYIVLRV) threads the bilayer. Topologically, residues 82 to 106 (QVIFQILFKLDQPCKLYYKAYDCKY) are extracellular. Residues 107 to 127 (VTFSLVAGNTGMIFIQSAMTI) traverse the membrane as a helical segment. Over 128–146 (DRILTTVFTNLWPKLKYWP) the chain is Cytoplasmic. Residues 147–167 (GVILSSFMIGCNFTNVQFIFW) form a helical membrane-spanning segment. At 168–192 (NDPLTDYVPTCGQFPPKSVGRFQKF) the chain is on the extracellular side. Residues 193 to 213 (LEIALYMSLAHMVINVIILYI) form a helical membrane-spanning segment. Residues 214-247 (NVVQDRRQRLVSTHDQSQSFDVNQRFQSRVALKS) lie on the Cytoplasmic side of the membrane. A helical membrane pass occupies residues 248 to 268 (TQAIFFLSMSQFLSCFLYTIF). Over 269 to 291 (TKLYLTLQPDMTPLQSGLTLALT) the chain is Extracellular. The chain crosses the membrane as a helical span at residues 292-312 (YTTPYACIAIPSLIMVTLTFI). Over 313–343 (RNQRHRSINALRSQTETGDQYMQKIKKIWDK) the chain is Cytoplasmic.

Belongs to the nematode receptor-like protein sra family.

Its subcellular location is the membrane. A G protein-coupled receptor required for olfactory imprinting a requisite in ordorant response such as benzaldehyde and isoamylalcohol. The chain is Serpentine receptor class alpha-11 from Caenorhabditis briggsae.